The following is a 466-amino-acid chain: tRNA modification GTPase MnmE (466 aa).

Positions 25, 82, and 127 each coordinate (6S)-5-formyl-5,6,7,8-tetrahydrofolate. In terms of domain architecture, TrmE-type G spans 223–388 (GIKVVIAGQP…LRRQLLQIAG (166 aa)). Residue Asn-233 participates in K(+) binding. Residues 233–238 (NAGKSS), 252–258 (TPIAGTT), 277–280 (DTAG), 346–349 (NKAD), and 369–371 (SAR) each bind GTP. Residue Ser-237 participates in Mg(2+) binding. K(+) is bound by residues Thr-252, Ile-254, and Thr-257. Position 258 (Thr-258) interacts with Mg(2+). Lys-466 contributes to the (6S)-5-formyl-5,6,7,8-tetrahydrofolate binding site.

Belongs to the TRAFAC class TrmE-Era-EngA-EngB-Septin-like GTPase superfamily. TrmE GTPase family. As to quaternary structure, homodimer. Heterotetramer of two MnmE and two MnmG subunits. Requires K(+) as cofactor.

It is found in the cytoplasm. Its function is as follows. Exhibits a very high intrinsic GTPase hydrolysis rate. Involved in the addition of a carboxymethylaminomethyl (cmnm) group at the wobble position (U34) of certain tRNAs, forming tRNA-cmnm(5)s(2)U34. The sequence is that of tRNA modification GTPase MnmE from Acidovorax sp. (strain JS42).